A 73-amino-acid polypeptide reads, in one-letter code: Small ribosomal subunit protein bS21 (73 aa).

Belongs to the bacterial ribosomal protein bS21 family.

The chain is Small ribosomal subunit protein bS21 from Parvibaculum lavamentivorans (strain DS-1 / DSM 13023 / NCIMB 13966).